The chain runs to 430 residues: Long-chain specific acyl-CoA dehydrogenase, mitochondrial (430 aa).

The transit peptide at 1 to 30 directs the protein to the mitochondrion; it reads MATRLLRGSLRLWGGLCAPRLPTASRCSHS. Lys-42 carries the N6-acetyllysine modification. Ser-54 and Ser-55 each carry phosphoserine. N6-acetyllysine; alternate is present on residues Lys-66 and Lys-81. An N6-succinyllysine; alternate mark is found at Lys-66 and Lys-81. Lys-92 and Lys-95 each carry N6-acetyllysine. Lys-165 carries the N6-succinyllysine modification. Residues 170–179 and 203–205 each bind FAD; these read IAMTEPGAGS and FIT. Ser-179 contacts substrate. Residue 227 to 228 coordinates substrate; it reads AH. N6-succinyllysine is present on Lys-240. Lys-254 and Lys-279 each carry N6-acetyllysine; alternate. N6-succinyllysine; alternate occurs at positions 254 and 279. Substrate-binding positions include Tyr-282 and 289-292; that span reads PQER. The active-site Proton acceptor is Glu-291. Arg-317 provides a ligand contact to FAD. Lys-318 bears the N6-acetyllysine mark. Lys-322 carries the N6-acetyllysine; alternate modification. Residue Lys-322 is modified to N6-succinyllysine; alternate. Position 328 (Gln-328) interacts with FAD. Lys-358 carries the post-translational modification N6-acetyllysine. A Phosphoserine modification is found at Ser-362. 385–389 is a binding site for FAD; that stretch reads QLHGG. A substrate-binding site is contributed by 412 to 413; the sequence is GG. 414-416 contributes to the FAD binding site; sequence TNE.

It belongs to the acyl-CoA dehydrogenase family. In terms of assembly, homotetramer. The cofactor is FAD. In terms of processing, acetylation at Lys-318 and Lys-322 in proximity of the cofactor-binding sites strongly reduces catalytic activity. These sites are deacetylated by SIRT3.

The protein resides in the mitochondrion matrix. It carries out the reaction a long-chain 2,3-saturated fatty acyl-CoA + oxidized [electron-transfer flavoprotein] + H(+) = a long-chain (2E)-enoyl-CoA + reduced [electron-transfer flavoprotein]. The catalysed reaction is hexanoyl-CoA + oxidized [electron-transfer flavoprotein] + H(+) = (2E)-hexenoyl-CoA + reduced [electron-transfer flavoprotein]. It catalyses the reaction octanoyl-CoA + oxidized [electron-transfer flavoprotein] + H(+) = (2E)-octenoyl-CoA + reduced [electron-transfer flavoprotein]. The enzyme catalyses decanoyl-CoA + oxidized [electron-transfer flavoprotein] + H(+) = (2E)-decenoyl-CoA + reduced [electron-transfer flavoprotein]. It carries out the reaction dodecanoyl-CoA + oxidized [electron-transfer flavoprotein] + H(+) = (2E)-dodecenoyl-CoA + reduced [electron-transfer flavoprotein]. The catalysed reaction is tetradecanoyl-CoA + oxidized [electron-transfer flavoprotein] + H(+) = (2E)-tetradecenoyl-CoA + reduced [electron-transfer flavoprotein]. It catalyses the reaction oxidized [electron-transfer flavoprotein] + hexadecanoyl-CoA + H(+) = (2E)-hexadecenoyl-CoA + reduced [electron-transfer flavoprotein]. The enzyme catalyses octadecanoyl-CoA + oxidized [electron-transfer flavoprotein] + H(+) = (2E)-octadecenoyl-CoA + reduced [electron-transfer flavoprotein]. It carries out the reaction eicosanoyl-CoA + oxidized [electron-transfer flavoprotein] + H(+) = (2E)-eicosenoyl-CoA + reduced [electron-transfer flavoprotein]. The catalysed reaction is docosanoyl-CoA + oxidized [electron-transfer flavoprotein] + H(+) = (2E)-docosenoyl-CoA + reduced [electron-transfer flavoprotein]. It catalyses the reaction tetracosanoyl-CoA + oxidized [electron-transfer flavoprotein] + H(+) = (2E)-tetracosenoyl-CoA + reduced [electron-transfer flavoprotein]. The enzyme catalyses (5E)-tetradecenoyl-CoA + oxidized [electron-transfer flavoprotein] + H(+) = (2E,5E)-tetradecadienoyl-CoA + reduced [electron-transfer flavoprotein]. It carries out the reaction (5Z)-tetradecenoyl-CoA + oxidized [electron-transfer flavoprotein] + H(+) = (2E,5Z)-tetradecadienoyl-CoA + reduced [electron-transfer flavoprotein]. The catalysed reaction is oxidized [electron-transfer flavoprotein] + (9Z)-octadecenoyl-CoA + H(+) = (2E,9Z)-octadecadienoyl-CoA + reduced [electron-transfer flavoprotein]. It functions in the pathway lipid metabolism; mitochondrial fatty acid beta-oxidation. Long-chain specific acyl-CoA dehydrogenase is one of the acyl-CoA dehydrogenases that catalyze the first step of mitochondrial fatty acid beta-oxidation, an aerobic process breaking down fatty acids into acetyl-CoA and allowing the production of energy from fats. The first step of fatty acid beta-oxidation consists in the removal of one hydrogen from C-2 and C-3 of the straight-chain fatty acyl-CoA thioester, resulting in the formation of trans-2-enoyl-CoA. Among the different mitochondrial acyl-CoA dehydrogenases, long-chain specific acyl-CoA dehydrogenase can act on saturated and unsaturated acyl-CoAs with 6 to 24 carbons with a preference for 8 to 18 carbons long primary chains. In Sus scrofa (Pig), this protein is Long-chain specific acyl-CoA dehydrogenase, mitochondrial.